The primary structure comprises 111 residues: uncharacterized protein (111 aa).

The disordered stretch occupies residues 43–72 (NGRAEETEADAPLPEEPSLPDLPDLSDLDS). Over residues 61 to 72 (LPDLPDLSDLDS) the composition is skewed to low complexity.

This is an uncharacterized protein from Homo sapiens (Human).